Consider the following 328-residue polypeptide: Tetraacyldisaccharide 4'-kinase (328 aa).

Residue 55–62 participates in ATP binding; the sequence is TVGGNGKT.

Belongs to the LpxK family.

It carries out the reaction a lipid A disaccharide + ATP = a lipid IVA + ADP + H(+). It functions in the pathway glycolipid biosynthesis; lipid IV(A) biosynthesis; lipid IV(A) from (3R)-3-hydroxytetradecanoyl-[acyl-carrier-protein] and UDP-N-acetyl-alpha-D-glucosamine: step 6/6. Functionally, transfers the gamma-phosphate of ATP to the 4'-position of a tetraacyldisaccharide 1-phosphate intermediate (termed DS-1-P) to form tetraacyldisaccharide 1,4'-bis-phosphate (lipid IVA). The chain is Tetraacyldisaccharide 4'-kinase from Hamiltonella defensa subsp. Acyrthosiphon pisum (strain 5AT).